Here is a 477-residue protein sequence, read N- to C-terminus: Glutamyl-tRNA reductase (477 aa).

Substrate contacts are provided by residues 49 to 52, S109, 114 to 116, and Q120; these read TCNR and EGQ. C50 (nucleophile) is an active-site residue. 221–226 provides a ligand contact to NADP(+); that stretch reads GAGSMS.

It belongs to the glutamyl-tRNA reductase family. As to quaternary structure, homodimer.

The enzyme catalyses (S)-4-amino-5-oxopentanoate + tRNA(Glu) + NADP(+) = L-glutamyl-tRNA(Glu) + NADPH + H(+). Its pathway is porphyrin-containing compound metabolism; protoporphyrin-IX biosynthesis; 5-aminolevulinate from L-glutamyl-tRNA(Glu): step 1/2. Catalyzes the NADPH-dependent reduction of glutamyl-tRNA(Glu) to glutamate 1-semialdehyde (GSA). The polypeptide is Glutamyl-tRNA reductase (Thermobifida fusca (strain YX)).